A 370-amino-acid polypeptide reads, in one-letter code: Alpha-ketoglutarate-dependent dioxygenase cnsP (370 aa).

Low complexity predominate over residues 1-12 (MSTTTVITPGTI). The disordered stretch occupies residues 1–20 (MSTTTVITPGTITREKNENG). Histidine 131 serves as a coordination point for substrate. Histidine 169 and aspartate 171 together coordinate Fe cation. A 2-oxoglutarate-binding site is contributed by threonine 197. Histidine 321 is a Fe cation binding site. Arginine 333 and arginine 337 together coordinate 2-oxoglutarate. Arginine 337 contributes to the substrate binding site.

The protein belongs to the TfdA dioxygenase family. Fe(2+) serves as cofactor.

Its pathway is alkaloid biosynthesis. In terms of biological role, alpha-ketoglutarate-dependent dioxygenase; part of the gene cluster that mediates the biosynthesis of communesins, a prominent class of indole alkaloids with great potential as pharmaceuticals. Communesins are biosynthesized by the coupling of tryptamine and aurantioclavine, two building blocks derived from L-tryptophan. The L-tryptophan decarboxylase cnsB converts L-tryptophan to tryptamine, whereas the tryptophan dimethylallyltransferase cnsF converts L-tryptophan to 4-dimethylallyl tryptophan which is further transformed to aurantioclavine by the aurantioclavine synthase cnsA, probably aided by the catalase cnsD. The cytochrome P450 monooxygenase cnsC catalyzes the heterodimeric coupling between the two different indole moieties, tryptamine and aurantioclavine, to construct vicinal quaternary stereocenters and yield the heptacyclic communesin scaffold. The O-methyltransferase cnsE then methylates the communesin scaffold to produce communesin K, the simplest characterized communesin that contains the heptacyclic core. The dioxygenase cnsJ converts communesin K into communesin I. Acylation to introduce the hexadienyl group at position N16 of communesin I by the acyltransferase cnsK leads to the production of communesin B. The hexadienyl group is produced by the highly reducing polyketide synthase cnsI, before being hydrolytically removed from cnsI by the serine hydrolase cnsH, converted into hexadienyl-CoA by the CoA ligase cnsG, and then transferred to communesin I by cnsK. Surprisingly, cnsK may also be a promiscuous acyltransferase that can tolerate a range of acyl groups, including acetyl-, propionyl-, and butyryl-CoA, which lead to communesins A, G and H respectively. The roles of the alpha-ketoglutarate-dependent dioxygenases cnsM and cnsP have still to be determined. The chain is Alpha-ketoglutarate-dependent dioxygenase cnsP from Penicillium expansum (Blue mold rot fungus).